A 348-amino-acid chain; its full sequence is Hereditary hemochromatosis protein homolog (348 aa).

A signal peptide spans 1–22 (MGPRARPALFFLILLRTVAAQG). The alpha-1 stretch occupies residues 23 to 114 (RPPRSHSLRY…IMDNHNHSKE (92 aa)). The Extracellular segment spans residues 23–306 (RPPRSHSLRY…WEPSLSNTLV (284 aa)). N-linked (GlcNAc...) asparagine glycans are attached at residues Asn110, Asn130, and Asn234. The tract at residues 115–205 (SHTLQVILGC…ELGRGVLDQQ (91 aa)) is alpha-2. 2 disulfides stabilise this stretch: Cys124-Cys187 and Cys225-Cys282. An alpha-3 region spans residues 206-297 (VPPLVKVTHH…GLDQPLTATW (92 aa)). The Ig-like C1-type domain occupies 207-296 (PPLVKVTHHV…PGLDQPLTAT (90 aa)). The segment at 298–306 (EPSLSNTLV) is connecting peptide. A helical membrane pass occupies residues 307-330 (TGVISGIAVCVIIFFIGILFRILR). The Cytoplasmic portion of the chain corresponds to 331 to 348 (KRQASRGAMGDYVLGECE).

Belongs to the MHC class I family. In terms of assembly, binds TFR through the extracellular domain in a pH-dependent manner.

Its subcellular location is the cell membrane. In terms of biological role, binds to transferrin receptor (TFR) and reduces its affinity for iron-loaded transferrin. This is Hereditary hemochromatosis protein homolog (HFE) from Ceratotherium simum (White rhinoceros).